Consider the following 324-residue polypeptide: Phospho-N-acetylmuramoyl-pentapeptide-transferase (324 aa).

Helical transmembrane passes span 9-29 (TFAV…PFLV), 53-73 (TMGA…FSFI), 77-97 (VSAA…LGFL), 117-137 (FLGQ…SDFA), 149-169 (IDLG…FSNA), 176-196 (LDGL…VIAF), 201-221 (MDVA…LLFN), 227-247 (IFMG…VSIL), 253-273 (LLLL…LQVF), and 304-324 (VLTF…VVIF).

Belongs to the glycosyltransferase 4 family. MraY subfamily. It depends on Mg(2+) as a cofactor.

It is found in the cell membrane. It catalyses the reaction UDP-N-acetyl-alpha-D-muramoyl-L-alanyl-gamma-D-glutamyl-meso-2,6-diaminopimeloyl-D-alanyl-D-alanine + di-trans,octa-cis-undecaprenyl phosphate = di-trans,octa-cis-undecaprenyl diphospho-N-acetyl-alpha-D-muramoyl-L-alanyl-D-glutamyl-meso-2,6-diaminopimeloyl-D-alanyl-D-alanine + UMP. Its pathway is cell wall biogenesis; peptidoglycan biosynthesis. In terms of biological role, catalyzes the initial step of the lipid cycle reactions in the biosynthesis of the cell wall peptidoglycan: transfers peptidoglycan precursor phospho-MurNAc-pentapeptide from UDP-MurNAc-pentapeptide onto the lipid carrier undecaprenyl phosphate, yielding undecaprenyl-pyrophosphoryl-MurNAc-pentapeptide, known as lipid I. This Listeria innocua serovar 6a (strain ATCC BAA-680 / CLIP 11262) protein is Phospho-N-acetylmuramoyl-pentapeptide-transferase.